A 328-amino-acid chain; its full sequence is Fructose-1,6-bisphosphatase class 1 (328 aa).

The Mg(2+) site is built by Glu91, Asp110, Leu112, and Asp113. Residues 113-116, Asn205, and 257-259 each bind substrate; these read DGSS and YLY. Glu277 is a binding site for Mg(2+).

The protein belongs to the FBPase class 1 family. In terms of assembly, homotetramer. Requires Mg(2+) as cofactor.

It localises to the cytoplasm. It carries out the reaction beta-D-fructose 1,6-bisphosphate + H2O = beta-D-fructose 6-phosphate + phosphate. The protein operates within carbohydrate biosynthesis; gluconeogenesis. The chain is Fructose-1,6-bisphosphatase class 1 from Azorhizobium caulinodans (strain ATCC 43989 / DSM 5975 / JCM 20966 / LMG 6465 / NBRC 14845 / NCIMB 13405 / ORS 571).